A 444-amino-acid polypeptide reads, in one-letter code: Putative methylesterase 15, chloroplastic (444 aa).

Residues 1–27 show a composition bias toward polar residues; the sequence is MGNSLRCISQEQDPNQKKPSSVVNGNS. Disordered regions lie at residues 1-36 and 48-91; these read MGNS…RRLS and PSLS…DSLI. A chloroplast-targeting transit peptide spans 1–58; sequence MGNSLRCISQEQDPNQKKPSSVVNGNSSEKHVRRLSLIPSFRRRTLLPSLSCSGSSTS. Positions 53 to 63 are enriched in low complexity; that stretch reads SGSSTSSTSKK. Basic residues predominate over residues 64 to 80; the sequence is GGIKTKKKIRERHHQEQ. A compositionally biased stretch (basic and acidic residues) spans 81 to 90; the sequence is HHHDHEKDSL. In terms of domain architecture, AB hydrolase-1 spans 188–312; the sequence is FVLVHGGGFG…QPDSNYDLME (125 aa). D262 functions as the Acyl-ester intermediate in the catalytic mechanism. Catalysis depends on charge relay system residues D390 and H418.

The protein belongs to the AB hydrolase superfamily. Methylesterase family.

Its subcellular location is the plastid. The protein resides in the chloroplast. Its function is as follows. Putative methylesterase. The polypeptide is Putative methylesterase 15, chloroplastic (Arabidopsis thaliana (Mouse-ear cress)).